The chain runs to 260 residues: tRNA1(Val) (adenine(37)-N6)-methyltransferase (260 aa).

This sequence belongs to the methyltransferase superfamily. tRNA (adenine-N(6)-)-methyltransferase family.

The protein resides in the cytoplasm. The enzyme catalyses adenosine(37) in tRNA1(Val) + S-adenosyl-L-methionine = N(6)-methyladenosine(37) in tRNA1(Val) + S-adenosyl-L-homocysteine + H(+). Functionally, specifically methylates the adenine in position 37 of tRNA(1)(Val) (anticodon cmo5UAC). The chain is tRNA1(Val) (adenine(37)-N6)-methyltransferase from Serratia proteamaculans (strain 568).